A 95-amino-acid polypeptide reads, in one-letter code: MKIRPLGDRVVIKRLEAEETTKSGIVLPSSAKEKPQMAEVVAVGPGGVVDGKEIQMQVKTGDKVFFSKYSGTEIKVDNEELLILRQDDILGIVEE.

This sequence belongs to the GroES chaperonin family. As to quaternary structure, heptamer of 7 subunits arranged in a ring. Interacts with the chaperonin GroEL.

The protein resides in the cytoplasm. Together with the chaperonin GroEL, plays an essential role in assisting protein folding. The GroEL-GroES system forms a nano-cage that allows encapsulation of the non-native substrate proteins and provides a physical environment optimized to promote and accelerate protein folding. GroES binds to the apical surface of the GroEL ring, thereby capping the opening of the GroEL channel. The chain is Co-chaperonin GroES from Clostridium acetobutylicum (strain ATCC 824 / DSM 792 / JCM 1419 / IAM 19013 / LMG 5710 / NBRC 13948 / NRRL B-527 / VKM B-1787 / 2291 / W).